Here is a 354-residue protein sequence, read N- to C-terminus: Methylthioribose-1-phosphate isomerase (354 aa).

Substrate is bound by residues 58 to 60 (RGA), Arg101, and Gln204. Asp245 acts as the Proton donor in catalysis. Residue 255 to 256 (NK) coordinates substrate.

The protein belongs to the eIF-2B alpha/beta/delta subunits family. MtnA subfamily.

It catalyses the reaction 5-(methylsulfanyl)-alpha-D-ribose 1-phosphate = 5-(methylsulfanyl)-D-ribulose 1-phosphate. It participates in amino-acid biosynthesis; L-methionine biosynthesis via salvage pathway; L-methionine from S-methyl-5-thio-alpha-D-ribose 1-phosphate: step 1/6. Functionally, catalyzes the interconversion of methylthioribose-1-phosphate (MTR-1-P) into methylthioribulose-1-phosphate (MTRu-1-P). This chain is Methylthioribose-1-phosphate isomerase, found in Xanthomonas campestris pv. campestris (strain ATCC 33913 / DSM 3586 / NCPPB 528 / LMG 568 / P 25).